Here is a 513-residue protein sequence, read N- to C-terminus: Keratin, type II cuticular Hb2 (513 aa).

A head region spans residues 1–120; that stretch reads MSYHSFQPGS…PTVQRVKRDE (120 aa). The IF rod domain occupies 120-431; that stretch reads EKEQIKCLNN…RLLEGEEHRL (312 aa). The segment at 121-155 is coil 1A; the sequence is KEQIKCLNNRFASFINKVRFLEQKNKLLETKWNFM. The interval 156 to 165 is linker 1; it reads QQQRCCQTNI. Positions 166–266 are coil 1B; the sequence is EPIFEGYISA…YEEEICLLQS (101 aa). Residues 267–283 are linker 12; it reads QISETSVIVKMDNSREL. The coil 2 stretch occupies residues 284 to 427; sequence DVDGIIAEIK…ATYRRLLEGE (144 aa). A tail region spans residues 428–513; it reads EHRLCEGIGP…AGGSSPSHKH (86 aa).

This sequence belongs to the intermediate filament family. As to quaternary structure, heterotetramer of two type I and two type II keratins.

The protein is Keratin, type II cuticular Hb2 (KRT82) of Homo sapiens (Human).